Reading from the N-terminus, the 189-residue chain is Imidazoleglycerol-phosphate dehydratase (189 aa).

Belongs to the imidazoleglycerol-phosphate dehydratase family.

The protein resides in the cytoplasm. It carries out the reaction D-erythro-1-(imidazol-4-yl)glycerol 3-phosphate = 3-(imidazol-4-yl)-2-oxopropyl phosphate + H2O. It functions in the pathway amino-acid biosynthesis; L-histidine biosynthesis; L-histidine from 5-phospho-alpha-D-ribose 1-diphosphate: step 6/9. The protein is Imidazoleglycerol-phosphate dehydratase of Nautilia profundicola (strain ATCC BAA-1463 / DSM 18972 / AmH).